Here is a 394-residue protein sequence, read N- to C-terminus: Elongation factor Tu 2 (394 aa).

The tr-type G domain occupies 10-204 (KPHVNVGTIG…FLDSYIPEPE (195 aa)). The segment at 19-26 (GHVDHGKT) is G1. GTP is bound at residue 19–26 (GHVDHGKT). Residue threonine 26 participates in Mg(2+) binding. The segment at 60 to 64 (GITIN) is G2. The tract at residues 81 to 84 (DCPG) is G3. GTP-binding positions include 81–85 (DCPGH) and 136–139 (NKCD). The G4 stretch occupies residues 136–139 (NKCD). The tract at residues 174 to 176 (SAL) is G5.

It belongs to the TRAFAC class translation factor GTPase superfamily. Classic translation factor GTPase family. EF-Tu/EF-1A subfamily. As to quaternary structure, monomer.

It is found in the cytoplasm. The catalysed reaction is GTP + H2O = GDP + phosphate + H(+). GTP hydrolase that promotes the GTP-dependent binding of aminoacyl-tRNA to the A-site of ribosomes during protein biosynthesis. This chain is Elongation factor Tu 2, found in Escherichia coli O139:H28 (strain E24377A / ETEC).